The chain runs to 165 residues: SsrA-binding protein (165 aa).

The protein belongs to the SmpB family.

It is found in the cytoplasm. In terms of biological role, required for rescue of stalled ribosomes mediated by trans-translation. Binds to transfer-messenger RNA (tmRNA), required for stable association of tmRNA with ribosomes. tmRNA and SmpB together mimic tRNA shape, replacing the anticodon stem-loop with SmpB. tmRNA is encoded by the ssrA gene; the 2 termini fold to resemble tRNA(Ala) and it encodes a 'tag peptide', a short internal open reading frame. During trans-translation Ala-aminoacylated tmRNA acts like a tRNA, entering the A-site of stalled ribosomes, displacing the stalled mRNA. The ribosome then switches to translate the ORF on the tmRNA; the nascent peptide is terminated with the 'tag peptide' encoded by the tmRNA and targeted for degradation. The ribosome is freed to recommence translation, which seems to be the essential function of trans-translation. This is SsrA-binding protein from Prochlorococcus marinus (strain MIT 9515).